We begin with the raw amino-acid sequence, 353 residues long: MCALQYLRPDLLYLKPYDAVPAPAADKLDANEFPLDWPAGFKQKLSLLWEKGIPSNRYPDAHHRGLKQAIAAYAGAEPEQISLGNGSDELIRSLLIATCLGGRGGILVAEPTFSMYAILAQSLGIPVVRVPRDPETFALDLERCQQALREHPIRVVCLVDPNSPTGNGLTAAEWEWVEGLPEEILVILDEAYFEFSRHTALPKLAEHPNWVILRTFSKAFRLAAHRVGYAVGHPQLMQVLDGIRLPYNLTALSQWAVQMALEHAEELLADVTLICQEREALYQALQELPGVRVWPSQANFLYFRVAGWDPQELQRAWQELGTGVRYTGGGLRLTVGTPEENRRALERLRQILQ.

The residue at position 218 (K218) is an N6-(pyridoxal phosphate)lysine.

This sequence belongs to the class-II pyridoxal-phosphate-dependent aminotransferase family. Histidinol-phosphate aminotransferase subfamily. In terms of assembly, homodimer. Pyridoxal 5'-phosphate is required as a cofactor.

The catalysed reaction is L-histidinol phosphate + 2-oxoglutarate = 3-(imidazol-4-yl)-2-oxopropyl phosphate + L-glutamate. It functions in the pathway amino-acid biosynthesis; L-histidine biosynthesis; L-histidine from 5-phospho-alpha-D-ribose 1-diphosphate: step 7/9. This Synechococcus sp. (strain JA-2-3B'a(2-13)) (Cyanobacteria bacterium Yellowstone B-Prime) protein is Histidinol-phosphate aminotransferase.